The primary structure comprises 288 residues: Bifunctional protein FolD (288 aa).

Residues 166–168 (GAS) and I232 contribute to the NADP(+) site.

This sequence belongs to the tetrahydrofolate dehydrogenase/cyclohydrolase family. In terms of assembly, homodimer.

The enzyme catalyses (6R)-5,10-methylene-5,6,7,8-tetrahydrofolate + NADP(+) = (6R)-5,10-methenyltetrahydrofolate + NADPH. It carries out the reaction (6R)-5,10-methenyltetrahydrofolate + H2O = (6R)-10-formyltetrahydrofolate + H(+). The protein operates within one-carbon metabolism; tetrahydrofolate interconversion. Catalyzes the oxidation of 5,10-methylenetetrahydrofolate to 5,10-methenyltetrahydrofolate and then the hydrolysis of 5,10-methenyltetrahydrofolate to 10-formyltetrahydrofolate. The chain is Bifunctional protein FolD from Cronobacter sakazakii (strain ATCC BAA-894) (Enterobacter sakazakii).